A 63-amino-acid polypeptide reads, in one-letter code: Large ribosomal subunit protein uL29 (63 aa).

The protein belongs to the universal ribosomal protein uL29 family.

This Psychromonas ingrahamii (strain DSM 17664 / CCUG 51855 / 37) protein is Large ribosomal subunit protein uL29.